The chain runs to 123 residues: Large ribosomal subunit protein uL29 (123 aa).

The protein belongs to the universal ribosomal protein uL29 family.

The sequence is that of Large ribosomal subunit protein uL29 (RPL35) from Theileria lestoquardi.